A 4684-amino-acid polypeptide reads, in one-letter code: Plectin (4684 aa).

The interval 1 to 1470 (MVAGMLMPRD…SELTTLTSQY (1470 aa)) is globular 1. Phosphoserine is present on residues Phe20 and Arg21. Val26 is modified (phosphotyrosine). Gly42 carries the post-translational modification Phosphoserine. Position 113 is a phosphothreonine (Thr113). A phosphoserine mark is found at Ser125 and Ser149. The interval 144-179 (ELEEVSPETPVVPATTQRTLARPGPEPAPATDERDR) is disordered. The tract at residues 175 to 400 (DERDRVQKKT…YVSSLYDAMP (226 aa)) is actin-binding. Calponin-homology (CH) domains lie at 179–282 (RVQK…LHFQ) and 295–400 (MTAK…DAMP). The Spectrin 1 repeat unit spans residues 645 to 710 (LQSVQRRPEL…SIEEFRAKIE (66 aa)). Ser720 carries the post-translational modification Phosphoserine. Spectrin repeat units lie at residues 740 to 824 (KLLN…REDH) and 837 to 930 (LQTQ…AVVQ). Residues 941 to 998 (RGRLPLLAVCDYKQVEVTVHKGDECQLVGPAQPSHWKVLSSSGSEAAVPSVCFLVPPP) enclose the SH3 domain. The required for interaction with intermediate filament proteins stretch occupies residues 964-4574 (ECQLVGPAQP…VGAYSKYLTC (3611 aa)). Position 1047 is a phosphoserine (Ser1047). The stretch at 1315 to 1415 (RERVAQLLER…QRFAKQYINA (101 aa)) is one Spectrin 4 repeat. Ser1435 carries the post-translational modification Phosphoserine. Positions 1469 to 2756 (QYIKFISETL…AHSEEVTASQ (1288 aa)) form a coiled coil. The central fibrous rod domain stretch occupies residues 1471-2755 (IKFISETLRR…LAHSEEVTAS (1285 aa)). Positions 1618–1650 (RAEEAEAQKRQAQEEAERLRRQVQDESQRKRQA) are disordered. Ser1721 is subject to Phosphoserine. Lys1725 carries the post-translational modification N6-acetyllysine. A Phosphoserine modification is found at Ser1732. Disordered stretches follow at residues 1794-1836 (LAQA…KQRQ), 2105-2139 (EAAR…EAAR), and 2217-2307 (RGEA…MEKH). Composition is skewed to basic and acidic residues over residues 1798-1836 (EAEK…KQRQ), 2105-2128 (EAAR…ERVQ), and 2217-2258 (RGEA…KQSA). Residues 2259 to 2272 (EEQAQARAQAQAAA) are compositionally biased toward low complexity. Residues 2273–2288 (EKLRKEAEQEAARRAQ) are compositionally biased toward basic and acidic residues. The residue at position 2631 (Ser2631) is a Phosphoserine. Lys2636 is modified (N6-acetyllysine). 2 disordered regions span residues 2668–2707 (REEQ…RRKQ) and 2763–2784 (LPNG…HSFD). Positions 2679–2707 (EQERQRLVASMEEARRRQHEAEEGVRRKQ) are enriched in basic and acidic residues. The globular 2 stretch occupies residues 2756 to 4684 (QVAATKTLPN…SLGGPESAVA (1929 aa)). Ser2782 and Ser2802 each carry phosphoserine. Plectin repeat units follow at residues 2826 to 2863 (RHYL…PGTA), 2864 to 2901 (LILL…PELH), 2902 to 2939 (HKLL…REHG), 2940 to 2977 (IRLL…EEMN), and 2981 to 3015 (ADPS…PETG). A Phosphothreonine modification is found at Thr2886. Phosphotyrosine is present on Tyr3033. Position 3036 is a phosphoserine (Ser3036). N6-acetyllysine is present on residues Lys3053 and Lys3091. Plectin repeat units follow at residues 3116-3153 (SLVP…VDTV), 3154-3191 (RRAL…SDMA), 3192-3229 (VALL…PEFH), 3230-3267 (EKLL…REQG), 3268-3305 (LRLL…EETS), and 3306-3343 (RALS…QLTG). A disordered region spans residues 3310-3331 (APRADAKAYSDPSTGEPATYGE). At Tyr3362 the chain carries Phosphotyrosine. Lys3420 is subject to N6-acetyllysine. Plectin repeat units lie at residues 3485–3522 (RTLL…ATTA), 3523–3560 (ALLL…PELH), 3561–3598 (EQLL…RQHG), 3599–3636 (IRLL…EEMN), and 3640–3674 (ADPS…PETG). The residue at position 3580 (Ser3580) is a Phosphoserine. Phosphothreonine is present on Thr3785. Plectin repeat units lie at residues 3820 to 3857 (WCYL…AEVA), 3858 to 3895 (RLLL…PELH), 3896 to 3933 (DRLL…TEEA), 3934 to 3971 (LRLL…KDTH), and 3975 to 4008 (SEPS…DGTG). The segment at 3956–4293 (PLEVAYQRGY…ETGKEMSVYE (338 aa)) is required for interaction with type2 keratins, DES and VIM. Phosphothreonine is present on Thr4030. Ser4054 carries the phosphoserine modification. Plectin repeat units follow at residues 4063 to 4100 (QKFL…PGTA), 4101 to 4138 (FELL…PEFK), 4139 to 4176 (DKLL…KDHG), 4177 to 4214 (IRLL…EEMN), 4218 to 4252 (TDPS…PQTG), 4265 to 4305 (RKTS…HQTY), and 4319 to 4356 (TISS…RSAL). The binding to intermediate filaments stretch occupies residues 4250 to 4300 (QTGLCLLPLKEKKRERKTSSKSSVRKRRVVIVDPETGKEMSVYEAYRKGLI). Residues Ser4382, Ser4384, Ser4385, Ser4386, Ser4389, Ser4390, Ser4391, and Ser4392 each carry the phosphoserine modification. Tyr4393 bears the Phosphotyrosine mark. 3 positions are modified to phosphoserine: Ser4396, Ser4400, and Ser4406. 5 Plectin repeats span residues 4408-4445 (SDPT…NITG), 4446-4483 (QRLL…KIMV), 4484-4521 (DRIN…YEAG), 4522-4559 (QRFL…ARTA), and 4560-4597 (QKLR…EGTG). Thr4411 carries the post-translational modification Phosphothreonine. Positions 4505-4574 (MSAAQALKKG…VGAYSKYLTC (70 aa)) are required for efficient interaction with KRT5 and KRT14 heterodimers. Position 4539 is a phosphothreonine; by CDK1 (Thr4539). A phosphoserine mark is found at Ser4607 and Ser4613. Positions 4611–4678 (YYSPYSVSGS…ASGSSASLGG (68 aa)) are enriched in low complexity. The disordered stretch occupies residues 4611–4684 (YYSPYSVSGS…SLGGPESAVA (74 aa)). The residue at position 4615 (Tyr4615) is a Phosphotyrosine. 3 positions are modified to phosphoserine: Ser4616, Ser4618, and Ser4622. Thr4623 is modified (phosphothreonine). A 4 X 4 AA tandem repeats of G-S-R-X region spans residues 4625 to 4640 (GSRTGSRTGSRAGSRR). Ser4626 is subject to Phosphoserine. Arg4627 and Arg4640 each carry omega-N-methylarginine. Phosphoserine occurs at positions 4642, 4672, and 4675.

Belongs to the plakin or cytolinker family. As to quaternary structure, homodimer or homotetramer. Interacts (via actin-binding domain) with SYNE3. Interacts (via calponin-homology (CH) 1 domain) with VIM (via rod region). Interacts (via N-terminus) with DST isoform 2 (via N-terminus). Interacts with FER. Interacts with TOR1A. Interacts with ANK3. Identified in complexes that contain VIM, EZR, AHNAK, BFSP1, BFSP2, ANK2, PLEC, PRX and spectrin. Interacts with COL17A1. Interacts with KRT14, heterodimers consisting of KRT8 and KRT18, heterodimers consisting of KRT5 and KRT14, heterodimers consisting of KRT14 and KRT15, and heterodimers consisting of KRT1 and KRT10. Interacts with DES and VIM. Phosphorylated by CDK1; regulates dissociation from intermediate filaments during mitosis. As to expression, widely expressed with highest levels in muscle, heart, placenta and spinal cord.

It is found in the cytoplasm. It localises to the cytoskeleton. The protein resides in the cell junction. The protein localises to the hemidesmosome. Its subcellular location is the cell projection. It is found in the podosome. In terms of biological role, interlinks intermediate filaments with microtubules and microfilaments and anchors intermediate filaments to desmosomes or hemidesmosomes. Could also bind muscle proteins such as actin to membrane complexes in muscle. May be involved not only in the filaments network, but also in the regulation of their dynamics. Structural component of muscle. Isoform 9 plays a major role in the maintenance of myofiber integrity. The chain is Plectin (PLEC) from Homo sapiens (Human).